The primary structure comprises 190 residues: Imidazoleglycerol-phosphate dehydratase (190 aa).

This sequence belongs to the imidazoleglycerol-phosphate dehydratase family.

It is found in the cytoplasm. It carries out the reaction D-erythro-1-(imidazol-4-yl)glycerol 3-phosphate = 3-(imidazol-4-yl)-2-oxopropyl phosphate + H2O. The protein operates within amino-acid biosynthesis; L-histidine biosynthesis; L-histidine from 5-phospho-alpha-D-ribose 1-diphosphate: step 6/9. The sequence is that of Imidazoleglycerol-phosphate dehydratase from Sulfurimonas denitrificans (strain ATCC 33889 / DSM 1251) (Thiomicrospira denitrificans (strain ATCC 33889 / DSM 1251)).